The primary structure comprises 413 residues: Transcription factor E2F4 (413 aa).

Residues 1–20 (MAEAGPQAPPPPGTPSRHEK) are disordered. N-acetylalanine is present on Ala2. Residues 16-85 (SRHEKSLGLL…KNSIQWKGVG (70 aa)) mediate DNA binding. The tract at residues 43 to 65 (LKLAADTLAVRQKRRIYDITNVL) is leucine-zipper. A DEF box motif is present at residues 48–85 (DTLAVRQKRRIYDITNVLEGIGLIEKKSKNSIQWKGVG). The segment at 86–181 (PGCNTREIAD…GLNGQKKYQI (96 aa)) is dimerization. The tract at residues 211–340 (PPEDLLQSPS…PSTSFEPIKA (130 aa)) is disordered. Composition is skewed to polar residues over residues 234 to 249 (AQSQEASRPNSPQLTP) and 293 to 306 (TLDTRPLQSSALLD). Positions 307-327 (SSSSSSSSSSSSSNSNSSSSS) are enriched in low complexity. Residues 337–413 (PIKADPTGVL…DLFDVPVLNL (77 aa)) are transactivation. Ser384 is modified (phosphoserine). An HCFC1-binding-motif (HBM) motif is present at residues 389–392 (DHDY). An interaction with RBL1 and RBL2 region spans residues 390–407 (HDYIYNLDESEGVCDLFD).

This sequence belongs to the E2F/DP family. In terms of assembly, component of the DRTF1/E2F transcription factor complex. Binds cooperatively with TFDP1/Dp-1 to E2F sites. The E2F4/TFDP1 dimer interacts preferentially with pocket protein RBL1, which inhibits the E2F transactivation domain. Lower affinity interaction has been found with retinoblastoma protein RB1. Interacts with TRRAP, which probably mediates its interaction with histone acetyltransferase complexes, leading to transcription activation. Interacts with HCFC1. Component of the DREAM complex (also named LINC complex) at least composed of E2F4, E2F5, LIN9, LIN37, LIN52, LIN54, MYBL1, MYBL2, RBL1, RBL2, RBBP4, TFDP1 and TFDP2. The complex exists in quiescent cells where it represses cell cycle-dependent genes. It dissociates in S phase when LIN9, LIN37, LIN52 and LIN54 form a subcomplex that binds to MYBL2. Interacts with PML (isoform PML-1, isoform PML-2, isoform PML-3, isoform PML-4 and isoform PML-5). Interacts with CEBPA (when phosphorylated). Post-translationally, differentially phosphorylated in vivo. Found in all tissue examined including heart, brain, placenta, lung, liver, skeletal muscle, kidney and pancreas.

The protein resides in the nucleus. Functionally, transcription activator that binds DNA cooperatively with DP proteins through the E2 recognition site, 5'-TTTC[CG]CGC-3' found in the promoter region of a number of genes whose products are involved in cell cycle regulation or in DNA replication. The DRTF1/E2F complex functions in the control of cell-cycle progression from G1 to S phase. E2F4 binds with high affinity to RBL1 and RBL2. In some instances can also bind RB1. Specifically required for multiciliate cell differentiation: together with MCIDAS and E2F5, binds and activate genes required for centriole biogenesis. The polypeptide is Transcription factor E2F4 (E2F4) (Homo sapiens (Human)).